The chain runs to 226 residues: uncharacterized protein (226 aa).

An HTH cro/C1-type domain is found at 168-226; sequence ISALRNKLGLTQTDLGKRINVDANVIRNIETGDLVAFNVQDPMVRSLAYALGIRTIKYQ. The H-T-H motif DNA-binding region spans 179-198; the sequence is QTDLGKRINVDANVIRNIET.

This is an uncharacterized protein from Acanthamoeba polyphaga mimivirus (APMV).